A 470-amino-acid polypeptide reads, in one-letter code: MKFKSLPMFALLMLGGCSLIPDYQQPAAPMQAQWPTGQAYGGQGDQRSIATALPKAKEFFKDPALVRLLDAALENNRDLRIAAKNVESYRALYRIQRAERFPTLDGQASGNRTRLPDDLSPTGDSRIDSQYQVGLVTAYELDLFGRIRSLSNQALEKYLATEEAQRSVQIALIGDVATTYFLWRTDQALLELTEATLTSYVESLAMIESSAWAGTSSELDVRQARTLVNQAQAQQALYTRRIAQDVNALELLLGSKIPTDLPKNSPLAMSALGKVPAGLPADLLLNRPDIRSAEHQLMAANANIGAARAAFFPRISLTASAGSASSDLDGLFNSGSDSWSFAPQISVPIFNAGKLRANLDYAELQKDVGVATYEKSIQTAFREVADGLAARGTYGKQLSAQSELVDNYKAYFSLAQQRYDQGVDSYLTVLDAQRELFSSQQKLLNDQLDQINSEVQLYKALGGGWSVSQN.

An N-terminal signal peptide occupies residues 1-16 (MKFKSLPMFALLMLGG). Cys-17 carries the N-palmitoyl cysteine lipid modification. The S-diacylglycerol cysteine moiety is linked to residue Cys-17. Positions 104-123 (LDGQASGNRTRLPDDLSPTG) are disordered.

This sequence belongs to the outer membrane factor (OMF) (TC 1.B.17) family.

The protein resides in the cell outer membrane. In terms of biological role, the outer membrane component of an organic solvent efflux pump. Involved in export of a number of low log POW compounds including hexane (log POW 3.5), toluene (log POW 2.5) and dimethylphthalate (log POW 2.3). The solvent resistance phenotype has been postulated to depend on the operon expression level. This chain is Solvent efflux pump outer membrane protein SrpC (srpC), found in Pseudomonas putida (Arthrobacter siderocapsulatus).